A 220-amino-acid chain; its full sequence is Inner membrane-spanning protein YciB (220 aa).

6 helical membrane passes run 20 to 40 (EVPP…FFFA), 57 to 77 (IGAP…IALA), 86 to 106 (LPIM…LTLW), 123 to 143 (LFGG…GYVF), 156 to 176 (KLTL…EIVW), and 187 to 207 (FKVW…MPLI).

The protein belongs to the YciB family.

The protein resides in the cell inner membrane. Its function is as follows. Plays a role in cell envelope biogenesis, maintenance of cell envelope integrity and membrane homeostasis. The polypeptide is Inner membrane-spanning protein YciB (Brucella abortus (strain S19)).